Consider the following 426-residue polypeptide: Serine hydroxymethyltransferase (426 aa).

(6S)-5,6,7,8-tetrahydrofolate-binding positions include leucine 118 and 122 to 124; that span reads GHL. The residue at position 227 (lysine 227) is an N6-(pyridoxal phosphate)lysine. Positions 342-368 are disordered; the sequence is NTIPNDPKPPTQASGIRLGTPAMTTRG.

It belongs to the SHMT family. In terms of assembly, homodimer. Pyridoxal 5'-phosphate is required as a cofactor.

Its subcellular location is the cytoplasm. The enzyme catalyses (6R)-5,10-methylene-5,6,7,8-tetrahydrofolate + glycine + H2O = (6S)-5,6,7,8-tetrahydrofolate + L-serine. It functions in the pathway one-carbon metabolism; tetrahydrofolate interconversion. The protein operates within amino-acid biosynthesis; glycine biosynthesis; glycine from L-serine: step 1/1. Its function is as follows. Catalyzes the reversible interconversion of serine and glycine with tetrahydrofolate (THF) serving as the one-carbon carrier. This reaction serves as the major source of one-carbon groups required for the biosynthesis of purines, thymidylate, methionine, and other important biomolecules. Also exhibits THF-independent aldolase activity toward beta-hydroxyamino acids, producing glycine and aldehydes, via a retro-aldol mechanism. The sequence is that of Serine hydroxymethyltransferase from Thermomicrobium roseum (strain ATCC 27502 / DSM 5159 / P-2).